The following is a 320-amino-acid chain: Dipeptide transport system permease protein DppC (320 aa).

Helical transmembrane passes span 56–76 (LAMAGLFILLFLFVMAVIGPF), 121–141 (LFVGVMAALIDFLIGVIYGGV), 154–176 (MRIIEVLYGLPYLLVVILLMVLM), 230–252 (LLPNTMGAIIVQMTLTVPAAIFA), 267–287 (FASWGVMANDGLPTILSGHWW), and 289–309 (LFFPAFFISLTMYAFNVLGDG). The ABC transmembrane type-1 domain maps to 117 to 307 (ARISLFVGVM…LTMYAFNVLG (191 aa)).

This sequence belongs to the binding-protein-dependent transport system permease family. OppBC subfamily.

The protein resides in the cell membrane. Functionally, probably part of the ABC transporter DppBCDE involved in dipeptide transport. Responsible for the translocation of the substrate across the membrane. This is Dipeptide transport system permease protein DppC (dppC) from Bacillus subtilis (strain 168).